A 170-amino-acid chain; its full sequence is Phosphopantetheine adenylyltransferase (170 aa).

Threonine 14 is a binding site for substrate. Residues 14 to 15 and histidine 22 contribute to the ATP site; that span reads TF. Substrate is bound by residues lysine 46, leucine 78, and arginine 92. Residues 93 to 95, glutamate 103, and 128 to 134 contribute to the ATP site; these read GLR and WLYISST.

The protein belongs to the bacterial CoaD family. In terms of assembly, homohexamer. The cofactor is Mg(2+).

Its subcellular location is the cytoplasm. It carries out the reaction (R)-4'-phosphopantetheine + ATP + H(+) = 3'-dephospho-CoA + diphosphate. Its pathway is cofactor biosynthesis; coenzyme A biosynthesis; CoA from (R)-pantothenate: step 4/5. Functionally, reversibly transfers an adenylyl group from ATP to 4'-phosphopantetheine, yielding dephospho-CoA (dPCoA) and pyrophosphate. In Oleidesulfovibrio alaskensis (strain ATCC BAA-1058 / DSM 17464 / G20) (Desulfovibrio alaskensis), this protein is Phosphopantetheine adenylyltransferase.